A 278-amino-acid chain; its full sequence is 4-deoxy-L-threo-5-hexosulose-uronate ketol-isomerase (278 aa).

The Zn(2+) site is built by H196, H198, E203, and H245.

Belongs to the KduI family. As to quaternary structure, homohexamer. Requires Zn(2+) as cofactor.

It catalyses the reaction 5-dehydro-4-deoxy-D-glucuronate = 3-deoxy-D-glycero-2,5-hexodiulosonate. Its pathway is glycan metabolism; pectin degradation; 2-dehydro-3-deoxy-D-gluconate from pectin: step 4/5. Catalyzes the isomerization of 5-dehydro-4-deoxy-D-glucuronate to 3-deoxy-D-glycero-2,5-hexodiulosonate. This Escherichia coli O127:H6 (strain E2348/69 / EPEC) protein is 4-deoxy-L-threo-5-hexosulose-uronate ketol-isomerase.